The sequence spans 327 residues: MPRGQKSKLRAREKRRQARAKNAQEKEASPGPFYGCPHQASPVASMPTSPNMPMGEQSTFSHSYTSTSDQNLDEKSSDDSEDTEDWCKDPINHKVVLLVQFLMEKYQKKEVITKADMLKYVIKTSKNHFNEILKRASEHMELAFGIDLKEVDPNRHCYALFNKLEHTFDGVMGEEKMPSSGLLMIVLGVIFMNDNCVSETEIWNVLSMMGVYANRKHFIYGDPKKVITEDMVQLKYLEYQQVPNSNPPSFEFTWGPRACAEISKMKILEFWAKIHDTTPDSFPTLYEAALKDEEERAQARAVARAHTAAMASPYSRATVCSSSHTNI.

The span at 1–19 (MPRGQKSKLRAREKRRQAR) shows a compositional bias: basic residues. The tract at residues 1-85 (MPRGQKSKLR…SSDDSEDTED (85 aa)) is disordered. A compositionally biased stretch (polar residues) spans 46–70 (MPTSPNMPMGEQSTFSHSYTSTSDQ). The MAGE domain maps to 91 to 289 (INHKVVLLVQ…DSFPTLYEAA (199 aa)).

Interacts with LNX1. As to expression, expressed in testis, stomach, large intestine, small intestine, spleen, lymph node, bone marrow lymphocytes and blood T-lymphocytes. Not detected in brain, heart, lung, liver or kidney (at protein level).

It is found in the cytoplasm. In terms of biological role, may enhance ubiquitin ligase activity of RING-type zinc finger-containing E3 ubiquitin-protein ligases. Proposed to act through recruitment and/or stabilization of the Ubl-conjugating enzyme (E2) at the E3:substrate complex. The polypeptide is Melanoma-associated antigen B18 (Mus musculus (Mouse)).